Reading from the N-terminus, the 256-residue chain is 5-keto-4-deoxy-D-glucarate aldolase (256 aa).

Residue His-50 is the Proton acceptor of the active site. Gln-151 provides a ligand contact to substrate. Glu-153 is a Mg(2+) binding site. Residues Ser-178 and Asp-179 each coordinate substrate. Asp-179 contributes to the Mg(2+) binding site.

This sequence belongs to the HpcH/HpaI aldolase family. KDGluc aldolase subfamily. As to quaternary structure, homohexamer; trimer of dimers. Requires Mg(2+) as cofactor.

The enzyme catalyses 5-dehydro-4-deoxy-D-glucarate = 2-hydroxy-3-oxopropanoate + pyruvate. The catalysed reaction is 2-dehydro-3-deoxy-D-glucarate = 2-hydroxy-3-oxopropanoate + pyruvate. It functions in the pathway carbohydrate acid metabolism; galactarate degradation; D-glycerate from galactarate: step 2/3. Catalyzes the reversible retro-aldol cleavage of both 5-keto-4-deoxy-D-glucarate and 2-keto-3-deoxy-D-glucarate to pyruvate and tartronic semialdehyde. This Klebsiella pneumoniae subsp. pneumoniae (strain ATCC 700721 / MGH 78578) protein is 5-keto-4-deoxy-D-glucarate aldolase.